Reading from the N-terminus, the 400-residue chain is Acetate kinase (400 aa).

A Mg(2+)-binding site is contributed by Asn10. Lys17 lines the ATP pocket. A substrate-binding site is contributed by Arg91. The active-site Proton donor/acceptor is Asp150. ATP contacts are provided by residues 210 to 214 (HLGNG), 285 to 287 (DCR), and 333 to 337 (GIGEN). Glu387 provides a ligand contact to Mg(2+).

This sequence belongs to the acetokinase family. In terms of assembly, homodimer. The cofactor is Mg(2+). Mn(2+) serves as cofactor.

The protein resides in the cytoplasm. The enzyme catalyses acetate + ATP = acetyl phosphate + ADP. The protein operates within metabolic intermediate biosynthesis; acetyl-CoA biosynthesis; acetyl-CoA from acetate: step 1/2. Its function is as follows. Catalyzes the formation of acetyl phosphate from acetate and ATP. Can also catalyze the reverse reaction. This is Acetate kinase from Yersinia pseudotuberculosis serotype IB (strain PB1/+).